The primary structure comprises 596 residues: Elongation factor 4 (596 aa).

The tr-type G domain maps to 2-184; that stretch reads SHIRNFSIIA…RLVHTIPAPE (183 aa). GTP-binding positions include 14-19 and 131-134; these read DHGKST and NKMD.

The protein belongs to the TRAFAC class translation factor GTPase superfamily. Classic translation factor GTPase family. LepA subfamily.

Its subcellular location is the cell inner membrane. The enzyme catalyses GTP + H2O = GDP + phosphate + H(+). Functionally, required for accurate and efficient protein synthesis under certain stress conditions. May act as a fidelity factor of the translation reaction, by catalyzing a one-codon backward translocation of tRNAs on improperly translocated ribosomes. Back-translocation proceeds from a post-translocation (POST) complex to a pre-translocation (PRE) complex, thus giving elongation factor G a second chance to translocate the tRNAs correctly. Binds to ribosomes in a GTP-dependent manner. This Pseudomonas putida (strain GB-1) protein is Elongation factor 4.